We begin with the raw amino-acid sequence, 128 residues long: Sulfurtransferase TusD (128 aa).

The Cysteine persulfide intermediate role is filled by Cys-78.

It belongs to the DsrE/TusD family. Heterohexamer, formed by a dimer of trimers. The hexameric TusBCD complex contains 2 copies each of TusB, TusC and TusD. The TusBCD complex interacts with TusE.

The protein localises to the cytoplasm. In terms of biological role, part of a sulfur-relay system required for 2-thiolation of 5-methylaminomethyl-2-thiouridine (mnm(5)s(2)U) at tRNA wobble positions. Accepts sulfur from TusA and transfers it in turn to TusE. The sequence is that of Sulfurtransferase TusD from Escherichia coli (strain K12 / MC4100 / BW2952).